The following is a 386-amino-acid chain: 2,3,4,5-tetrahydropyridine-2,6-dicarboxylate N-succinyltransferase (386 aa).

The active-site Acyl-anhydride intermediate is the glutamate 257. Residues arginine 259, glycine 274, serine 277, alanine 300, 315–316 (DA), glycine 323, lysine 349, and 362–365 (RQDS) each bind succinyl-CoA.

Belongs to the type 2 tetrahydrodipicolinate N-succinyltransferase family. Homotrimer.

The protein localises to the cytoplasm. The catalysed reaction is (S)-2,3,4,5-tetrahydrodipicolinate + succinyl-CoA + H2O = (S)-2-succinylamino-6-oxoheptanedioate + CoA. Its pathway is amino-acid biosynthesis; L-lysine biosynthesis via DAP pathway; LL-2,6-diaminopimelate from (S)-tetrahydrodipicolinate (succinylase route): step 1/3. In terms of biological role, catalyzes the conversion of the cyclic tetrahydrodipicolinate (THDP) into the acyclic N-succinyl-L-2-amino-6-oxopimelate using succinyl-CoA. This chain is 2,3,4,5-tetrahydropyridine-2,6-dicarboxylate N-succinyltransferase, found in Campylobacter jejuni subsp. jejuni serotype O:2 (strain ATCC 700819 / NCTC 11168).